Consider the following 214-residue polypeptide: Cell division protein B1 (214 aa).

Functionally, part of a cell division machinery. This Sulfolobus acidocaldarius (strain ATCC 33909 / DSM 639 / JCM 8929 / NBRC 15157 / NCIMB 11770) protein is Cell division protein B1.